The following is a 153-amino-acid chain: Suppressor of RNA silencing (153 aa).

Residues 1–23 (MMATFSCVCCGTSTTSTYCGKRC) are C-1. The tract at residues 1 to 85 (MMATFSCVCC…IVSRFCGQKH (85 aa)) is interaction with TGB1. A basic motif (BM) region spans residues 19 to 47 (CGKRCERKHVYSETRNKRLELYKKYLLEP). The segment at 60–85 (CGMPCSIAEEACDQLPIVSRFCGQKH) is C-2. The segment at 86–127 (ADLYDSLLKRSEQELLLEFLQKKMQELKLSHIVKMAKLESEV) is interaction with replication protein alpha-A. The stretch at 92-132 (LLKRSEQELLLEFLQKKMQELKLSHIVKMAKLESEVNAIRK) forms a coiled coil. Residue S96 is modified to Phosphoserine.

Belongs to the virgaviridae suppressor of RNA silencing family. As to quaternary structure, homooligomer. Interacts (via C-terminus) with replication protein alpha-A. Interacts (via N-terminus) with the movement protein TGB1; this interaction targets gammab-TGB1 at the periphery of chloroplasts and plasmodesmata. Interacts with host autophagy protein ATG7; this interaction disrupts the host ATG7-ATG8 interaction to promote viral infection. Interacts (via BM region) with host STY46; this interaction inhibits the viral infection. Phosphorylated at Ser-96 by a host PKA-like kinase; the phosphorylation at this site seems to suppress host cell death. In terms of processing, serine-phosphorylated by host STY46 kinase.

The protein resides in the host chloroplast envelope. It is found in the host endoplasmic reticulum. Its subcellular location is the host cell junction. It localises to the host plasmodesma. Suppressor of RNA-mediated gene silencing, also known as post-transcriptional gene silencing (PTGS), a mechanism of plant viral defense that limits the accumulation of viral RNAs. Promotes viral cell-to-cell long distance movement by enhancing the ATPase activity of TGB1. Enhances RNA helicase activity of replication protein alpha-A. Suppresses autophagy induced by the host as a defense mechanism against viral infection. The polypeptide is Suppressor of RNA silencing (Barley stripe mosaic virus (BSMV)).